A 52-amino-acid chain; its full sequence is Conotoxin-like peptide 2 (52 aa).

Positions 1–18 (MKFSTILLLVCPTVALSA) are cleaved as a signal peptide. Disulfide bonds link cysteine 24–cysteine 38, cysteine 31–cysteine 42, and cysteine 37–cysteine 49.

Its subcellular location is the secreted. The chain is Conotoxin-like peptide 2 (CTL-2) from Orgyia pseudotsugata (Douglas-fir tussock moth).